A 149-amino-acid chain; its full sequence is Large ribosomal subunit protein bL9 (149 aa).

The protein belongs to the bacterial ribosomal protein bL9 family.

Binds to the 23S rRNA. The sequence is that of Large ribosomal subunit protein bL9 from Klebsiella pneumoniae subsp. pneumoniae (strain ATCC 700721 / MGH 78578).